Here is a 200-residue protein sequence, read N- to C-terminus: Holliday junction branch migration complex subunit RuvA (200 aa).

A domain I region spans residues 1–64; sequence MYAYFRGRVV…EDALQLYGFS (64 aa). The domain II stretch occupies residues 65-143; sequence SEEEKQLFRL…KLSPPGAAAT (79 aa). Positions 144-154 are flexible linker; that stretch reads PAGAVQCGIRE. The interval 154–200 is domain III; the sequence is EDATNALLTLGFSRTAAQQAVAGVLEANPGGSVEDVVKSALLAMHNR.

The protein belongs to the RuvA family. In terms of assembly, homotetramer. Forms an RuvA(8)-RuvB(12)-Holliday junction (HJ) complex. HJ DNA is sandwiched between 2 RuvA tetramers; dsDNA enters through RuvA and exits via RuvB. An RuvB hexamer assembles on each DNA strand where it exits the tetramer. Each RuvB hexamer is contacted by two RuvA subunits (via domain III) on 2 adjacent RuvB subunits; this complex drives branch migration. In the full resolvosome a probable DNA-RuvA(4)-RuvB(12)-RuvC(2) complex forms which resolves the HJ.

It is found in the cytoplasm. In terms of biological role, the RuvA-RuvB-RuvC complex processes Holliday junction (HJ) DNA during genetic recombination and DNA repair, while the RuvA-RuvB complex plays an important role in the rescue of blocked DNA replication forks via replication fork reversal (RFR). RuvA specifically binds to HJ cruciform DNA, conferring on it an open structure. The RuvB hexamer acts as an ATP-dependent pump, pulling dsDNA into and through the RuvAB complex. HJ branch migration allows RuvC to scan DNA until it finds its consensus sequence, where it cleaves and resolves the cruciform DNA. This chain is Holliday junction branch migration complex subunit RuvA, found in Chlorobium luteolum (strain DSM 273 / BCRC 81028 / 2530) (Pelodictyon luteolum).